A 106-amino-acid chain; its full sequence is ATP-dependent Clp protease adapter protein ClpS (106 aa).

Belongs to the ClpS family. Binds to the N-terminal domain of the chaperone ClpA.

Functionally, involved in the modulation of the specificity of the ClpAP-mediated ATP-dependent protein degradation. The polypeptide is ATP-dependent Clp protease adapter protein ClpS (Citrobacter koseri (strain ATCC BAA-895 / CDC 4225-83 / SGSC4696)).